We begin with the raw amino-acid sequence, 100 residues long: Urease subunit gamma (100 aa).

This sequence belongs to the urease gamma subunit family. Heterotrimer of UreA (gamma), UreB (beta) and UreC (alpha) subunits. Three heterotrimers associate to form the active enzyme.

It localises to the cytoplasm. It carries out the reaction urea + 2 H2O + H(+) = hydrogencarbonate + 2 NH4(+). Its pathway is nitrogen metabolism; urea degradation; CO(2) and NH(3) from urea (urease route): step 1/1. The polypeptide is Urease subunit gamma (Picosynechococcus sp. (strain ATCC 27264 / PCC 7002 / PR-6) (Agmenellum quadruplicatum)).